The following is a 355-amino-acid chain: uncharacterized protein (355 aa).

The interval 1–61 is disordered; that stretch reads MNKKIEKNNN…PKRRGRRPKK (61 aa). The segment covering 18 to 37 has biased composition (polar residues); that stretch reads YESNTTDNQLIMKKNANSGS.

This is an uncharacterized protein from Acanthamoeba polyphaga mimivirus (APMV).